A 307-amino-acid polypeptide reads, in one-letter code: MMIISSQILLLFGFKLFFETRGEDDIVELLCKIGQTQIPSSDPLPILRGSGSGGREENTPLPPPLPHQNLFIQEDEMSSWPHHPLRQDYLCSELYASTPAPHPQSSVSLAPPPPKPPSSAPYGQIIAPRSAPRIQGTEEARGSTSRKRSRAAEMHNLAERRRREKINERMKTLQQLIPRCNKSTKVSMLEDVIEYVKSLEMQINQFMPHMAMGMNQPPAYIPFPSQAHMAGVGPSYPPPRYPFPNIQTFDPSRVWLQSPQPNPVSNQPQMNPYGQFVGHHQMQQSLPPPLQVILSQYPLCLFLCSNK.

Disordered stretches follow at residues 41 to 68 and 101 to 155; these read SDPL…LPHQ and PHPQ…AEMH. Positions 110-119 are enriched in pro residues; it reads APPPPKPPSS. The region spanning 150–199 is the bHLH domain; the sequence is RAAEMHNLAERRRREKINERMKTLQQLIPRCNKSTKVSMLEDVIEYVKSL.

It belongs to the bHLH protein family. In terms of assembly, homodimer.

It is found in the nucleus. This Arabidopsis thaliana (Mouse-ear cress) protein is Transcription factor bHLH127 (BHLH127).